The primary structure comprises 69 residues: MPQLNTSTWTLTISLMIISLFCIYQLKMMNQTLIQITPSTEQSKLTKHTLPWEKKWTKIYLPHSSHQQF.

Residues Thr8–Tyr24 form a helical membrane-spanning segment. An N6-acetyllysine; alternate modification is found at Lys55. Lys55 bears the N6-succinyllysine; alternate mark. Residue Lys58 is modified to N6-acetyllysine.

It belongs to the ATPase protein 8 family. F-type ATPases have 2 components, CF(1) - the catalytic core - and CF(0) - the membrane proton channel. Component of an ATP synthase complex composed of ATP5PB, ATP5MC1, ATP5F1E, ATP5PD, ATP5ME, ATP5PF, ATP5MF, MT-ATP6, MT-ATP8, ATP5F1A, ATP5F1B, ATP5F1D, ATP5F1C, ATP5PO, ATP5MG, ATP5MK and ATP5MJ. Interacts with PRICKLE3.

It localises to the mitochondrion membrane. In terms of biological role, mitochondrial membrane ATP synthase (F(1)F(0) ATP synthase or Complex V) produces ATP from ADP in the presence of a proton gradient across the membrane which is generated by electron transport complexes of the respiratory chain. F-type ATPases consist of two structural domains, F(1) - containing the extramembraneous catalytic core and F(0) - containing the membrane proton channel, linked together by a central stalk and a peripheral stalk. During catalysis, ATP synthesis in the catalytic domain of F(1) is coupled via a rotary mechanism of the central stalk subunits to proton translocation. Part of the complex F(0) domain. Minor subunit located with subunit a in the membrane. The sequence is that of ATP synthase protein 8 (MT-ATP8) from Didelphis virginiana (North American opossum).